Reading from the N-terminus, the 171-residue chain is Adenine phosphoribosyltransferase (171 aa).

The protein belongs to the purine/pyrimidine phosphoribosyltransferase family. Homodimer.

The protein resides in the cytoplasm. It carries out the reaction AMP + diphosphate = 5-phospho-alpha-D-ribose 1-diphosphate + adenine. It functions in the pathway purine metabolism; AMP biosynthesis via salvage pathway; AMP from adenine: step 1/1. Catalyzes a salvage reaction resulting in the formation of AMP, that is energically less costly than de novo synthesis. The polypeptide is Adenine phosphoribosyltransferase (Ruminiclostridium cellulolyticum (strain ATCC 35319 / DSM 5812 / JCM 6584 / H10) (Clostridium cellulolyticum)).